The sequence spans 381 residues: Transcriptional regulatory protein FlgR (381 aa).

The 112-residue stretch at 2 to 113 (KIAIVEDDIN…LLLESIYRTK (112 aa)) folds into the Response regulatory domain. Residue Asp-51 is modified to 4-aspartylphosphate. The Sigma-54 factor interaction domain maps to 136–365 (FLAASKALEE…LLGVVERAAI (230 aa)). Residues 164 to 171 (GESGVGKE) and 227 to 236 (ANKGTIFLDE) contribute to the ATP site.

Post-translationally, phosphorylated by FlgS.

Its function is as follows. Member of the two-component regulatory system FlgR/FlgS that induces the transcriptional induction of the genes needed in motility and flagellar biogenesis. Upon phosphorylation by FlgS, functions as a transcriptional regulator and activates transcription of RpoN-dependent flagellar genes. This Helicobacter pylori (strain ATCC 700392 / 26695) (Campylobacter pylori) protein is Transcriptional regulatory protein FlgR (flgR).